Consider the following 132-residue polypeptide: Tyrosine phosphatase-like protein N2 (132 aa).

The Tyrosine-protein phosphatase domain occupies 1–132; it reads MQGPMKNTVA…DILGRFQRVF (132 aa).

The protein belongs to the protein-tyrosine phosphatase family.

This chain is Tyrosine phosphatase-like protein N2 (N4), found in Microplitis demolitor (Parasitoid wasp).